The sequence spans 1222 residues: BOS complex subunit NOMO3 (1222 aa).

Positions 1–31 are cleaved as a signal peptide; it reads MLVGQGAGPLGPAVVTAAVVLLLSGVGPAHG. At 32–1155 the chain is on the extracellular side; the sequence is SEDIVVGCGG…NPTRKLPEQD (1124 aa). Asn-50, Asn-218, and Asn-618 each carry an N-linked (GlcNAc...) asparagine glycan. The chain crosses the membrane as a helical span at residues 1156–1176; it reads IAQGSYIALPLTLLVLLAGYN. At 1177–1222 the chain is on the cytoplasmic side; the sequence is HDKLIPLLLQLTSRLQGVGALGQAASDNSGPEDAKRQAKKQKTRRT. Residues 1198-1222 form a disordered region; the sequence is GQAASDNSGPEDAKRQAKKQKTRRT. Over residues 1213 to 1222 the composition is skewed to basic residues; that stretch reads QAKKQKTRRT.

As to quaternary structure, component of the back of Sec61 (BOS) complex, composed of NCLN/Nicalin, NOMO (NOMO1, NOMO2 or NOMO3) and TMEM147. The BOS complex is part of the multi-pass translocon (MPT) complex, composed of three subcomplexes, the GEL complex (composed of RAB5IF/OPTI and TMCO1), the BOS complex (composed of NCLN/Nicalin, NOMO and TMEM147) and the PAT complex (composed of WDR83OS/Asterix and CCDC47). The MPT complex associates with the SEC61 complex. Due to the strong similarity between NOMO1, NOMO2 and NOMO3, similar interaction pattern probably occur for the three gene copies.

It localises to the endoplasmic reticulum membrane. Component of the multi-pass translocon (MPT) complex that mediates insertion of multi-pass membrane proteins into the lipid bilayer of membranes. The MPT complex takes over after the SEC61 complex: following membrane insertion of the first few transmembrane segments of proteins by the SEC61 complex, the MPT complex occludes the lateral gate of the SEC61 complex to promote insertion of subsequent transmembrane regions. This Homo sapiens (Human) protein is BOS complex subunit NOMO3 (NOMO3).